The chain runs to 336 residues: Dihydrolipoyl dehydrogenase (336 aa).

Residues 34–42, Lys51, and Gly115 each bind FAD; that span reads EKEVVGGIC. A disulfide bridge connects residues Cys42 and Cys47. NAD(+)-binding positions include 180-184, Glu203, Val237, and 264-267; these read GGGVI and SVGT. FAD-binding residues include Asp304 and Ala312.

This sequence belongs to the class-I pyridine nucleotide-disulfide oxidoreductase family. In terms of assembly, homodimer. FAD serves as cofactor.

It is found in the cytoplasm. The catalysed reaction is N(6)-[(R)-dihydrolipoyl]-L-lysyl-[protein] + NAD(+) = N(6)-[(R)-lipoyl]-L-lysyl-[protein] + NADH + H(+). Functionally, lipoamide dehydrogenase is a component of the alpha-ketoacid dehydrogenase complexes. This is Dihydrolipoyl dehydrogenase (pdhD) from Acholeplasma laidlawii.